Here is a 59-residue protein sequence, read N- to C-terminus: Small ribosomal subunit protein bS21 (59 aa).

The interval 27–59 is disordered; the sequence is GLMAEMRKREHYEKPSVRRKKKAQARNKKKRYA. The span at 31-42 shows a compositional bias: basic and acidic residues; that stretch reads EMRKREHYEKPS. Positions 43 to 59 are enriched in basic residues; it reads VRRKKKAQARNKKKRYA.

Belongs to the bacterial ribosomal protein bS21 family.

In Carboxydothermus hydrogenoformans (strain ATCC BAA-161 / DSM 6008 / Z-2901), this protein is Small ribosomal subunit protein bS21.